The following is a 179-amino-acid chain: Riboflavin kinase (179 aa).

Residue 61 to 66 (GDGEGR) coordinates CDP. Positions 90 and 92 each coordinate Mg(2+). 2 residues coordinate FMN: Thr147 and Glu155. 160–163 (VELR) serves as a coordination point for CDP.

Belongs to the archaeal riboflavin kinase family. It depends on Mg(2+) as a cofactor.

The enzyme catalyses riboflavin + CTP = CDP + FMN + H(+). Its pathway is cofactor biosynthesis; FMN biosynthesis; FMN from riboflavin (CTP route): step 1/1. Its function is as follows. Catalyzes the CTP-dependent phosphorylation of riboflavin (vitamin B2) to form flavin mononucleotide (FMN). This chain is Riboflavin kinase, found in Ignicoccus hospitalis (strain KIN4/I / DSM 18386 / JCM 14125).